Reading from the N-terminus, the 159-residue chain is Ribosomal RNA large subunit methyltransferase H (159 aa).

Residues L76, G108, and 127–132 (FSKMTL) contribute to the S-adenosyl-L-methionine site.

This sequence belongs to the RNA methyltransferase RlmH family. Homodimer.

The protein localises to the cytoplasm. The catalysed reaction is pseudouridine(1915) in 23S rRNA + S-adenosyl-L-methionine = N(3)-methylpseudouridine(1915) in 23S rRNA + S-adenosyl-L-homocysteine + H(+). Functionally, specifically methylates the pseudouridine at position 1915 (m3Psi1915) in 23S rRNA. The chain is Ribosomal RNA large subunit methyltransferase H from Bacillus mycoides (strain KBAB4) (Bacillus weihenstephanensis).